Here is a 383-residue protein sequence, read N- to C-terminus: Probable cell wall hydrolase LytN (383 aa).

The N-terminal stretch at 1 to 49 is a signal peptide; it reads MFVYYCKECFIMNKQQSKVRYSIRKVSIGILSISIGMFLALGMSNKAYA. Residues 175–219 form the LysM domain; the sequence is QIYTVKKGDTLSAIALKYKTTVSNIQNTNNIANPNLIFIGQKLKV. The Peptidase C51 domain maps to 241 to 378; that stretch reads NSSTLNYLKT…NYENDMIFIR (138 aa).

It localises to the secreted. Probably involved in peptidoglycan hydrolysis. The sequence is that of Probable cell wall hydrolase LytN (lytN) from Staphylococcus aureus (strain MSSA476).